We begin with the raw amino-acid sequence, 288 residues long: Light-independent protochlorophyllide reductase iron-sulfur ATP-binding protein (288 aa).

ATP contacts are provided by residues 12–17 and K41; that span reads GIGKST. S16 contributes to the Mg(2+) binding site. Residues C97 and C131 each coordinate [4Fe-4S] cluster. Position 182-183 (182-183) interacts with ATP; sequence NR.

Belongs to the NifH/BchL/ChlL family. Homodimer. Protochlorophyllide reductase is composed of three subunits; ChlL, ChlN and ChlB. It depends on [4Fe-4S] cluster as a cofactor.

The catalysed reaction is chlorophyllide a + oxidized 2[4Fe-4S]-[ferredoxin] + 2 ADP + 2 phosphate = protochlorophyllide a + reduced 2[4Fe-4S]-[ferredoxin] + 2 ATP + 2 H2O. It participates in porphyrin-containing compound metabolism; chlorophyll biosynthesis (light-independent). Component of the dark-operative protochlorophyllide reductase (DPOR) that uses Mg-ATP and reduced ferredoxin to reduce ring D of protochlorophyllide (Pchlide) to form chlorophyllide a (Chlide). This reaction is light-independent. The L component serves as a unique electron donor to the NB-component of the complex, and binds Mg-ATP. In Synechocystis sp. (strain ATCC 27184 / PCC 6803 / Kazusa), this protein is Light-independent protochlorophyllide reductase iron-sulfur ATP-binding protein.